The chain runs to 647 residues: Glutamyl-tRNA(Gln) amidotransferase subunit B, mitochondrial (647 aa).

Positions 87 to 106 are disordered; it reads QAKALKKSGHKKKKSSDNQT. Basic residues predominate over residues 90–100; sequence ALKKSGHKKKK.

Belongs to the GatB/GatE family. GatB subfamily. Subunit of the heterotrimeric GatCAB amidotransferase (AdT) complex, composed of A, B and C subunits.

It is found in the mitochondrion. The enzyme catalyses L-glutamyl-tRNA(Gln) + L-glutamine + ATP + H2O = L-glutaminyl-tRNA(Gln) + L-glutamate + ADP + phosphate + H(+). Functionally, allows the formation of correctly charged Gln-tRNA(Gln) through the transamidation of misacylated Glu-tRNA(Gln) in the mitochondria. The reaction takes place in the presence of glutamine and ATP through an activated gamma-phospho-Glu-tRNA(Gln). This chain is Glutamyl-tRNA(Gln) amidotransferase subunit B, mitochondrial, found in Neurospora crassa (strain ATCC 24698 / 74-OR23-1A / CBS 708.71 / DSM 1257 / FGSC 987).